We begin with the raw amino-acid sequence, 293 residues long: Glycine--tRNA ligase alpha subunit (293 aa).

The protein belongs to the class-II aminoacyl-tRNA synthetase family. Tetramer of two alpha and two beta subunits.

The protein resides in the cytoplasm. It catalyses the reaction tRNA(Gly) + glycine + ATP = glycyl-tRNA(Gly) + AMP + diphosphate. The polypeptide is Glycine--tRNA ligase alpha subunit (Oceanobacillus iheyensis (strain DSM 14371 / CIP 107618 / JCM 11309 / KCTC 3954 / HTE831)).